The primary structure comprises 90 residues: UPF0297 protein LVIS_1222 (90 aa).

It belongs to the UPF0297 family.

This is UPF0297 protein LVIS_1222 from Levilactobacillus brevis (strain ATCC 367 / BCRC 12310 / CIP 105137 / JCM 1170 / LMG 11437 / NCIMB 947 / NCTC 947) (Lactobacillus brevis).